A 214-amino-acid chain; its full sequence is 3,4-dihydroxy-2-butanone 4-phosphate synthase (214 aa).

Residues 37 to 38, Asp42, 150 to 154, and Glu174 each bind D-ribulose 5-phosphate; these read RE and RRGHT. Glu38 lines the Mg(2+) pocket. Residue His153 coordinates Mg(2+).

The protein belongs to the DHBP synthase family. In terms of assembly, homodimer. It depends on Mg(2+) as a cofactor. Mn(2+) is required as a cofactor.

It catalyses the reaction D-ribulose 5-phosphate = (2S)-2-hydroxy-3-oxobutyl phosphate + formate + H(+). The protein operates within cofactor biosynthesis; riboflavin biosynthesis; 2-hydroxy-3-oxobutyl phosphate from D-ribulose 5-phosphate: step 1/1. Catalyzes the conversion of D-ribulose 5-phosphate to formate and 3,4-dihydroxy-2-butanone 4-phosphate. This is 3,4-dihydroxy-2-butanone 4-phosphate synthase from Nitratidesulfovibrio vulgaris (strain ATCC 29579 / DSM 644 / CCUG 34227 / NCIMB 8303 / VKM B-1760 / Hildenborough) (Desulfovibrio vulgaris).